Consider the following 652-residue polypeptide: Bifunctional protein ThiO/ThiG (652 aa).

Residues methionine 1 to serine 366 form a thiO region. Residues isoleucine 5–valine 19 and alanine 44–methionine 46 contribute to the FAD site. Glutamate 52 lines the glycine pocket. Valine 173 provides a ligand contact to FAD. Glycine is bound by residues arginine 301 and arginine 327. Histidine 325–leucine 331 contributes to the FAD binding site. The interval proline 393–serine 652 is thiG. The Schiff-base intermediate with DXP role is filled by lysine 494. Residues glycine 555, alanine 581 to glycine 582, and asparagine 603 to serine 604 each bind 1-deoxy-D-xylulose 5-phosphate.

This sequence in the N-terminal section; belongs to the DAO family. ThiO subfamily. In the C-terminal section; belongs to the ThiG family. In terms of assembly, interacts with ThiH and ThiS. Requires FAD as cofactor.

The protein localises to the cytoplasm. It catalyses the reaction glycine + O2 + H2O = glyoxylate + H2O2 + NH4(+). It carries out the reaction [ThiS sulfur-carrier protein]-C-terminal-Gly-aminoethanethioate + 2-iminoacetate + 1-deoxy-D-xylulose 5-phosphate = [ThiS sulfur-carrier protein]-C-terminal Gly-Gly + 2-[(2R,5Z)-2-carboxy-4-methylthiazol-5(2H)-ylidene]ethyl phosphate + 2 H2O + H(+). Its pathway is cofactor biosynthesis; thiamine diphosphate biosynthesis. Catalyzes the FAD-dependent oxidative deamination of glycine. Is essential for thiamine biosynthesis since the oxidation of glycine catalyzed by ThiO generates the glycine imine intermediate (dehydroglycine) required for the biosynthesis of the thiazole ring of thiamine pyrophosphate. Its function is as follows. Catalyzes the rearrangement of 1-deoxy-D-xylulose 5-phosphate (DXP) to produce the thiazole phosphate moiety of thiamine. Sulfur is provided by the thiocarboxylate moiety of the carrier protein ThiS. In vitro, sulfur can be provided by H(2)S. This Nostoc sp. (strain PCC 7120 / SAG 25.82 / UTEX 2576) protein is Bifunctional protein ThiO/ThiG (thiO/thiG).